Here is a 514-residue protein sequence, read N- to C-terminus: Inosine-5'-monophosphate dehydrogenase (514 aa).

2 CBS domains span residues 112 to 171 (FISK…DTPV) and 175 to 233 (MTRR…PHST). Residues 270 to 272 (DSS) and 320 to 322 (GMG) contribute to the NAD(+) site. Residues Gly322 and Gly324 each coordinate K(+). Ser325 is an IMP binding site. Cys327 is a K(+) binding site. The active-site Thioimidate intermediate is Cys327. Residues 360–362 (DGG), 383–384 (GG), and 407–411 (YRGMG) contribute to the IMP site. The Proton acceptor role is filled by Arg425. Position 437 (Gln437) interacts with IMP. Glu496, Gly497, and Gly498 together coordinate K(+). Positions 512 to 514 (AKM) match the Microbody targeting signal motif.

This sequence belongs to the IMPDH/GMPR family. In terms of assembly, heterotetramer. Interacts with glycosomal protein sorting receptor PEX5. Requires K(+) as cofactor.

The protein resides in the glycosome. The enzyme catalyses IMP + NAD(+) + H2O = XMP + NADH + H(+). It participates in purine metabolism; XMP biosynthesis via de novo pathway; XMP from IMP: step 1/1. With respect to regulation, mycophenolic acid (MPA) is a non-competitive inhibitor that prevents formation of the closed enzyme conformation by binding to the same site as the amobile flap. In contrast, mizoribine monophosphate (MZP) is a competitive inhibitor that induces the closed conformation. MPA is a potent inhibitor of mammalian IMPDHs but a poor inhibitor of the bacterial enzymes. MZP is a more potent inhibitor of bacterial IMPDH. Potently inhibited by MPA. Inhibited by XMP and GMP. Functionally, catalyzes the conversion of inosine 5'-phosphate (IMP) to xanthosine 5'-phosphate (XMP), the first committed and rate-limiting step in the de novo synthesis of guanine nucleotides, and therefore plays an important role in the regulation of cell growth. This chain is Inosine-5'-monophosphate dehydrogenase, found in Leishmania donovani.